A 399-amino-acid polypeptide reads, in one-letter code: Centrosomal protein 43 (399 aa).

The LisH domain occupies 70 to 102 (DGRLVASLVAEFLQFFNLDFTLAVFQPETSTFQ). Threonine 143 carries the post-translational modification Phosphothreonine. The tract at residues 143–311 (TSGEGALDLS…LKESESKRGN (169 aa)) is disordered. 4 positions are modified to phosphoserine: serine 152, serine 156, serine 160, and serine 202. Positions 197–209 (NDASHSDTSISSS) are enriched in low complexity. Over residues 245–256 (PEEDDLEGDSFF) the composition is skewed to acidic residues. Over residues 286–302 (APPLKSGLSSLAGAPSL) the composition is skewed to low complexity. 2 positions are modified to phosphoserine: serine 301 and serine 326. Residues 328–357 (GLGTGEEDDYVDDFNSTSHRSEKSELSIGE) are disordered. Tyrosine 337 is modified (phosphotyrosine).

It belongs to the CEP43 family. In terms of assembly, homodimer. Part of a ternary complex that contains CEP350, CEP43 and MAPRE1. Interacts directly with CEP350 and MAPRE1. Interacts with CEP19. Interacts (via N-terminus) with CEP350 (via C-terminus).

Its subcellular location is the cytoplasm. It is found in the cytoskeleton. It localises to the microtubule organizing center. The protein resides in the centrosome. The protein localises to the centriole. Its subcellular location is the cilium basal body. Functionally, required for anchoring microtubules to the centrosomes. Required for ciliation. The protein is Centrosomal protein 43 (CEP43) of Bos taurus (Bovine).